The primary structure comprises 220 residues: UPF0319 protein YccT (220 aa).

Positions 1–20 are cleaved as a signal peptide; it reads MKTGALATFLALCLPATVFA.

Belongs to the UPF0319 family.

The sequence is that of UPF0319 protein YccT from Salmonella heidelberg (strain SL476).